Here is a 453-residue protein sequence, read N- to C-terminus: Phosphoglucosamine mutase (453 aa).

The Phosphoserine intermediate role is filled by Ser-110. 4 residues coordinate Mg(2+): Ser-110, Asp-247, Asp-249, and Asp-251. Phosphoserine is present on Ser-110.

This sequence belongs to the phosphohexose mutase family. The cofactor is Mg(2+). Activated by phosphorylation.

The catalysed reaction is alpha-D-glucosamine 1-phosphate = D-glucosamine 6-phosphate. Catalyzes the conversion of glucosamine-6-phosphate to glucosamine-1-phosphate. The polypeptide is Phosphoglucosamine mutase (Tropheryma whipplei (strain TW08/27) (Whipple's bacillus)).